The sequence spans 110 residues: Protein RALF-like 19 (110 aa).

Residues 1–23 (MGIKILLILGLLTLAVVAESANA) form the signal peptide. Residues 24–58 (TWTLTKSCVNGQGCIGEDGELDYLMDSETNRRQLA) constitute a propeptide, removed in mature form. 2 disulfide bridges follow: cysteine 76-cysteine 86 and cysteine 99-cysteine 105.

This sequence belongs to the plant rapid alkalinization factor (RALF) family. In terms of processing, proteolytically cleaved, probably by S1P, a subtilisin-like serine protease (subtilase).

It localises to the secreted. Functionally, cell signaling peptide that may regulate plant stress, growth, and development. Mediates a rapid alkalinization of extracellular space by mediating a transient increase in the cytoplasmic Ca(2+) concentration leading to a calcium-dependent signaling events through a cell surface receptor and a concomitant activation of some intracellular mitogen-activated protein kinases. In Arabidopsis thaliana (Mouse-ear cress), this protein is Protein RALF-like 19 (RALFL19).